A 314-amino-acid polypeptide reads, in one-letter code: Solute carrier family 25 member 44 (314 aa).

3 Solcar repeats span residues 18 to 100 (KKFY…TRKF), 107 to 210 (SNTV…YAEQ), and 220 to 302 (PHIV…LKKL). A run of 6 helical transmembrane segments spans residues 20–42 (FYVFGVAMTMMIRVSVYPFTLIR), 71–90 (TGLYRGFLVNTFTLISGQCY), 113–133 (LVAGGSASLVAQSITVPIDVV), 185–201 (GYVASLLTYIPNSAVWW), 222–239 (IVFQAVSGPLAAATASIL), and 278–296 (LSARIISATPSTIVIVVGY).

This sequence belongs to the mitochondrial carrier (TC 2.A.29) family.

Its subcellular location is the mitochondrion membrane. The enzyme catalyses L-valine(in) = L-valine(out). The catalysed reaction is L-leucine(in) = L-leucine(out). In terms of biological role, mitochondrial solute transporter which transports branched-chain amino acid (BCAA; valine, leucine and isoleucine) into mitochondria in brown adipose tissue (BAT). BAT is involved in BCAA catabolism and actively utilizes BCAA in the mitochondria for thermogenesis. This chain is Solute carrier family 25 member 44, found in Pongo abelii (Sumatran orangutan).